Reading from the N-terminus, the 63-residue chain is MAWLADYWWIILIILIGMLINGIKELRNVDHTRFLLNKPKLPPHRDNNDKWDDEDDDWPKKKP.

The helical transmembrane segment at 3-23 threads the bilayer; sequence WLADYWWIILIILIGMLINGI. Residues 37–63 are disordered; it reads NKPKLPPHRDNNDKWDDEDDDWPKKKP.

It belongs to the UPF0370 family.

It is found in the cell membrane. The chain is UPF0370 protein PC1_1167 from Pectobacterium carotovorum subsp. carotovorum (strain PC1).